Reading from the N-terminus, the 1034-residue chain is Probable outer membrane protein PmpF (1034 aa).

An N-terminal signal peptide occupies residues 1–25 (MIKRTSLSFACLSFFYLSTISILQA). Low complexity-rich tracts occupy residues 664-673 (SAPTSATSIA) and 680-709 (ETFT…ASNS). The interval 664–709 (SAPTSATSIAEQKKTSETFTPSNTTTASIPNIKASAGSGSGSASNS) is disordered. An Autotransporter domain is found at 755-1034 (RSLLPDNSWF…YINAGGALVF (280 aa)).

It belongs to the PMP outer membrane protein family.

The protein localises to the secreted. The protein resides in the cell wall. It is found in the cell outer membrane. The polypeptide is Probable outer membrane protein PmpF (pmpF) (Chlamydia trachomatis serovar D (strain ATCC VR-885 / DSM 19411 / UW-3/Cx)).